A 177-amino-acid polypeptide reads, in one-letter code: MEALILEPSLYTVKAILILDNDGDRLFAKYYDDTYPSVKEQKAFEKNIFNKTHRTDSEIALLEGLTVVYKSSIDLYFYVIGSSYENELMLMAVLNCLFDSLSQMLRKNVEKRALLENMEGLFLAVDEIVDGGVILESDPQQVVHRVALRGEDVPLTEQTVSQVLQSAKEQIKWSLLR.

Methionine 1 bears the N-acetylmethionine mark.

The protein belongs to the adaptor complexes small subunit family. Oligomeric complex that consists of at least the alpha, beta, beta', gamma, delta, epsilon and zeta subunits.

It is found in the cytoplasm. It localises to the golgi apparatus membrane. The protein localises to the cytoplasmic vesicle. Its subcellular location is the COPI-coated vesicle membrane. In terms of biological role, the coatomer is a cytosolic protein complex that binds to dilysine motifs and reversibly associates with Golgi non-clathrin-coated vesicles, which further mediate biosynthetic protein transport from the ER, via the Golgi up to the trans Golgi network. Coatomer complex is required for budding from Golgi membranes, and is essential for the retrograde Golgi-to-ER transport of dilysine-tagged proteins. The zeta subunit may be involved in regulating the coat assembly and, hence, the rate of biosynthetic protein transport due to its association-dissociation properties with the coatomer complex. In Homo sapiens (Human), this protein is Coatomer subunit zeta-1 (COPZ1).